The following is a 243-amino-acid chain: Thaumatin-like protein (243 aa).

Positions 1-20 (MASINLFLFAFLLLLSHASA) are cleaved as a signal peptide. Cystine bridges form between C29–C238, C77–C87, C92–C98, C144–C228, C149–C211, C157–C174, C178–C187, and C188–C198.

Belongs to the thaumatin family.

This chain is Thaumatin-like protein, found in Arabidopsis thaliana (Mouse-ear cress).